A 224-amino-acid polypeptide reads, in one-letter code: Mammalian ependymin-related protein 1 (224 aa).

A signal peptide spans 1-37; it reads MPGRAPLHTVPGALGPWLLGCLWAWTLCGLCSLGAVG. Intrachain disulfides connect Cys-42/Cys-172, Cys-88/Cys-222, and Cys-113/Cys-210. N-linked (GlcNAc...) asparagine glycosylation is found at Asn-130 and Asn-182.

It belongs to the ependymin family. In terms of assembly, homodimer. Post-translationally, N-glycosylated; the glycan contains mannose-6-phosphate moieties.

Its subcellular location is the lysosome lumen. It is found in the secreted. Functionally, binds anionic lipids and gangliosides at acidic pH. This chain is Mammalian ependymin-related protein 1 (EPDR1), found in Macaca fascicularis (Crab-eating macaque).